A 250-amino-acid chain; its full sequence is uncharacterized protein (250 aa).

6 4Fe-4S ferredoxin-type domains span residues 38 to 67, 69 to 98, 124 to 153, 154 to 183, 191 to 220, and 220 to 249; these read KLLY…KAKV, KSAK…VIEG, KKYE…AVRR, KSIE…VERE, RDIE…QDGD, and DKVK…MWEK. 24 residues coordinate [4Fe-4S] cluster: cysteine 47, cysteine 50, cysteine 53, cysteine 57, cysteine 78, cysteine 81, cysteine 84, cysteine 88, cysteine 133, cysteine 136, cysteine 139, cysteine 143, cysteine 163, cysteine 166, cysteine 169, cysteine 173, cysteine 200, cysteine 203, cysteine 206, cysteine 210, cysteine 229, cysteine 232, cysteine 235, and cysteine 239.

This is an uncharacterized protein from Methanocaldococcus jannaschii (strain ATCC 43067 / DSM 2661 / JAL-1 / JCM 10045 / NBRC 100440) (Methanococcus jannaschii).